The primary structure comprises 555 residues: Cytochrome P450 monooxygeanse terQ (555 aa).

Residues 10–30 (VPAHAWPTITVAGAVMVVVLL) form a helical membrane-spanning segment. Cys-479 lines the heme pocket. A disordered region spans residues 535-555 (DAGNTARVDPGAPDGVASEPS).

This sequence belongs to the cytochrome P450 family. Heme is required as a cofactor.

The protein resides in the membrane. The protein operates within secondary metabolite biosynthesis. Its function is as follows. Cytochrome P450 monooxygeanse; part of the gene cluster that mediates the biosynthesis of terpendoles, indole-diterpene (IDT) mycotoxins including terpendole I, terpendole K, terpendole C, as well as the kinesin Eg5 inhibitor terpendole E. TerQ is a C11-hydroxylating enzyme that converts paspalline into terpendole E. Is also able to hydroxylate 13-desoxyterpendole I at C-13 to produce terpendole I. Terpendoles biosynthesis begins with the synthesis of geranylgeranyl diphosphate (GGPP) by a yet unidentified GGPP synthase. Condensation of indole-3-glycerol phosphate with GGPP by the prenyltransferase terC then forms 3-geranylgeranylindole (3-GGI), followed by epoxidation and cyclization of this intermediate (by the FAD-dependent monooxygeanse terM and the terpene cyclase terB) to form paspaline. The cytochrome monooxygenase terQ then hydroxylates paspalline at C-11 to yield terpendole E. The cytochrome monooxygenase terP converts terpendole E to 13-desoxyterpendole I, and terQ converts 13-desoxyterpendole I into terpendole I. TerF and terK are required for conversion of terpendole I to terpendole C which is further converted to terpendole K. The polypeptide is Cytochrome P450 monooxygeanse terQ (Tolypocladium album (Soil fungus)).